The chain runs to 338 residues: Secretion system apparatus protein SsaL (338 aa).

The chain is Secretion system apparatus protein SsaL (ssaL) from Salmonella typhimurium (strain LT2 / SGSC1412 / ATCC 700720).